The following is a 220-amino-acid chain: Protein-L-isoaspartate O-methyltransferase (220 aa).

Ser-70 is a catalytic residue.

Belongs to the methyltransferase superfamily. L-isoaspartyl/D-aspartyl protein methyltransferase family.

The protein resides in the cytoplasm. It catalyses the reaction [protein]-L-isoaspartate + S-adenosyl-L-methionine = [protein]-L-isoaspartate alpha-methyl ester + S-adenosyl-L-homocysteine. Its function is as follows. Catalyzes the methyl esterification of L-isoaspartyl residues in peptides and proteins that result from spontaneous decomposition of normal L-aspartyl and L-asparaginyl residues. It plays a role in the repair and/or degradation of damaged proteins. The polypeptide is Protein-L-isoaspartate O-methyltransferase (Halorhodospira halophila (strain DSM 244 / SL1) (Ectothiorhodospira halophila (strain DSM 244 / SL1))).